A 322-amino-acid chain; its full sequence is Methionyl-tRNA formyltransferase (322 aa).

112–115 (SLLP) lines the (6S)-5,6,7,8-tetrahydrofolate pocket.

The protein belongs to the Fmt family.

The enzyme catalyses L-methionyl-tRNA(fMet) + (6R)-10-formyltetrahydrofolate = N-formyl-L-methionyl-tRNA(fMet) + (6S)-5,6,7,8-tetrahydrofolate + H(+). Its function is as follows. Attaches a formyl group to the free amino group of methionyl-tRNA(fMet). The formyl group appears to play a dual role in the initiator identity of N-formylmethionyl-tRNA by promoting its recognition by IF2 and preventing the misappropriation of this tRNA by the elongation apparatus. The sequence is that of Methionyl-tRNA formyltransferase from Synechococcus sp. (strain JA-2-3B'a(2-13)) (Cyanobacteria bacterium Yellowstone B-Prime).